The primary structure comprises 349 residues: Outer membrane protein assembly factor BamC (349 aa).

The first 24 residues, 1 to 24, serve as a signal peptide directing secretion; sequence MAILLQKSKVMKIAGMSLAMLLAA. Cys25 carries N-palmitoyl cysteine lipidation. Cys25 carries the S-diacylglycerol cysteine lipid modification.

This sequence belongs to the BamC family. As to quaternary structure, part of the Bam complex, which is composed of the outer membrane protein BamA, and four lipoproteins BamB, BamC, BamD and BamE.

It localises to the cell outer membrane. Part of the outer membrane protein assembly complex, which is involved in assembly and insertion of beta-barrel proteins into the outer membrane. This chain is Outer membrane protein assembly factor BamC, found in Photorhabdus asymbiotica subsp. asymbiotica (strain ATCC 43949 / 3105-77) (Xenorhabdus luminescens (strain 2)).